The chain runs to 127 residues: Small ribosomal subunit protein uS13 (127 aa).

The tract at residues 100–127 (GQRTRTNARTRKGVRKTVAGKKKAPAKK) is disordered. Positions 101 to 127 (QRTRTNARTRKGVRKTVAGKKKAPAKK) are enriched in basic residues.

It belongs to the universal ribosomal protein uS13 family. Part of the 30S ribosomal subunit. Forms a loose heterodimer with protein S19. Forms two bridges to the 50S subunit in the 70S ribosome.

Located at the top of the head of the 30S subunit, it contacts several helices of the 16S rRNA. In the 70S ribosome it contacts the 23S rRNA (bridge B1a) and protein L5 of the 50S subunit (bridge B1b), connecting the 2 subunits; these bridges are implicated in subunit movement. Contacts the tRNAs in the A and P-sites. The chain is Small ribosomal subunit protein uS13 from Synechococcus sp. (strain JA-3-3Ab) (Cyanobacteria bacterium Yellowstone A-Prime).